The sequence spans 726 residues: MDTFITRNFQTTIIQKAKNTMAEFSEDPELQPAMLFNICVHLEVCYVISDMNFLDEEGKSYTALEGQGKEQNLRPQYEVIEGMPRTIAWMVQRSLAQEHGIETPKYLADLFDYKTKRFIEVGITKGLADDYFWKKKEKLGNSMELMIFSYNQDYSLSNESSLDEEGKGRVLSRLTELQAELSLKNLWQVLIGEEDVEKGIDFKLGQTISRLRDISVPAGFSNFEGMRSYIDNIDPKGAIERNLARMSPLVSATPKKLKWEDLRPIGPHIYNHELPEVPYNAFLLMSDELGLANMTEGKSKKPKTLAKECLEKYSTLRDQTDPILIMKSEKANENFLWKLWRDCVNTISNEEMSNELQKTNYAKWATGDGLTYQKIMKEVAIDDETMCQEEPKIPNKCRVAAWVQTEMNLLSTLTSKRALDLPEIGPDVAPVEHVGSERRKYFVNEINYCKASTVMMKYVLFHTSLLNESNASMGKYKVIPITNRVVNEKGESFDMLYGLAVKGQSHLRGDTDVVTVVTFEFSSTDPRVDSGKWPKYTVFRIGSLFVSGREKSVYLYCRVNGTNKIQMKWGMEARRCLLQSMQQMEAIVEQESSIQGYDMTKACFKGDRVNSPKTFSIGTQEGKLVKGSFGKALRVIFTKCLMHYVFGNAQLEGFSAESRRLLLLIQALKDRKGPWVFDLEGMYSGIEECISNNPWVIQSAYWFNEWLGFEKEGSKVLESVDEIMDE.

Residues histidine 41, glutamate 81, aspartate 109, glutamate 120, and valine 121 each contribute to the Mn(2+) site. The Nuclear localization signal 1 (NLS1) motif lies at 125 to 140; it reads KGLADDYFWKKKEKLG. Positions 183–244 match the Nuclear localization signal 2 (NLS2) motif; sequence LKNLWQVLIG…PKGAIERNLA (62 aa).

This sequence belongs to the influenza viruses PA family. As to quaternary structure, influenza RNA polymerase is composed of three subunits: PB1, PB2 and PA. Interacts (via C-terminus) with PB1 (via N-terminus). The cofactor is Mn(2+). Phosphorylated on serines and threonines by host kinases, including human casein kinase II.

The protein resides in the host cytoplasm. It is found in the host nucleus. Plays an essential role in viral RNA transcription and replication by forming the heterotrimeric polymerase complex together with PB1 and PB2 subunits. The complex transcribes viral mRNAs by using a unique mechanism called cap-snatching. It consists in the hijacking and cleavage of host capped pre-mRNAs. These short capped RNAs are then used as primers for viral mRNAs. The PB2 subunit is responsible for the binding of the 5' cap of cellular pre-mRNAs which are subsequently cleaved after 10-13 nucleotides by the PA subunit that carries the endonuclease activity. The sequence is that of Polymerase acidic protein from Influenza B virus (strain B/Panama/45/1990).